An 80-amino-acid chain; its full sequence is UPF0125 protein PD_1376 (80 aa).

The protein belongs to the UPF0125 (RnfH) family.

This is UPF0125 protein PD_1376 from Xylella fastidiosa (strain Temecula1 / ATCC 700964).